The following is a 311-amino-acid chain: Ornithine carbamoyltransferase (311 aa).

Residues 54 to 57, Gln81, Arg105, and 132 to 135 contribute to the carbamoyl phosphate site; these read STRT and HPCQ. Residues Asn163, Asp221, and 225-226 each bind L-ornithine; that span reads SM. Carbamoyl phosphate-binding positions include 261-262 and Arg289; that span reads CL.

It belongs to the aspartate/ornithine carbamoyltransferase superfamily. OTCase family.

The protein resides in the cytoplasm. It carries out the reaction carbamoyl phosphate + L-ornithine = L-citrulline + phosphate + H(+). It functions in the pathway amino-acid degradation; L-arginine degradation via ADI pathway; carbamoyl phosphate from L-arginine: step 2/2. Reversibly catalyzes the transfer of the carbamoyl group from carbamoyl phosphate (CP) to the N(epsilon) atom of ornithine (ORN) to produce L-citrulline. The chain is Ornithine carbamoyltransferase from Azoarcus sp. (strain BH72).